The primary structure comprises 542 residues: Putative leucine aminopeptidase 1 (542 aa).

Mn(2+) contacts are provided by K294 and D299. K323 is an active-site residue. Mn(2+)-binding residues include D336, D396, and E398. R400 is a catalytic residue.

The protein belongs to the peptidase M17 family. As to quaternary structure, homohexamer (dimer of homotrimers). Mn(2+) serves as cofactor.

It is found in the cytoplasm. It catalyses the reaction Release of an N-terminal amino acid, Xaa-|-Yaa-, in which Xaa is preferably Leu, but may be other amino acids including Pro although not Arg or Lys, and Yaa may be Pro. Amino acid amides and methyl esters are also readily hydrolyzed, but rates on arylamides are exceedingly low.. It carries out the reaction Release of N-terminal proline from a peptide.. Functionally, presumably involved in the processing and regular turnover of intracellular proteins. Catalyzes the removal of unsubstituted N-terminal amino acids from various peptides. The polypeptide is Putative leucine aminopeptidase 1 (Oryza sativa subsp. japonica (Rice)).